Reading from the N-terminus, the 113-residue chain is MADLAVPLTFTDAAANKVKTLISEEENTELKLRVYITGGGCSGFQYGFTFDEKTNDGDLIVENSGVKLVVDPMSLQYLVGGTVDYTEGLEGSRFIVNNPNASTTCGCGSSFSI.

Residues cysteine 41, cysteine 105, and cysteine 107 each coordinate iron-sulfur cluster.

This sequence belongs to the HesB/IscA family. In terms of assembly, homodimer. Requires iron-sulfur cluster as cofactor.

Its function is as follows. Required for insertion of 4Fe-4S clusters for at least IspG. This Histophilus somni (strain 129Pt) (Haemophilus somnus) protein is Iron-sulfur cluster insertion protein ErpA.